The following is a 997-amino-acid chain: Glutamate [NMDA] receptor subunit 1 (997 aa).

An N-terminal signal peptide occupies residues 1 to 26; it reads MAVAEFVFCWPLFELAIVLLVAPIHA. Topologically, residues 27 to 573 are extracellular; sequence AQRHTASDNP…TLVSFLQPFS (547 aa). N-linked (GlcNAc...) asparagine glycans are attached at residues asparagine 258, asparagine 314, asparagine 345, asparagine 397, asparagine 454, asparagine 481, and asparagine 501. Glycine-binding positions include 530–532 and arginine 537; that span reads PLT. Residues 574 to 594 form a helical membrane-spanning segment; the sequence is NTLWILVMVSVHVVALVLYLL. Residues 595 to 651 lie on the Cytoplasmic side of the membrane; the sequence is DRFSPFGRFKLSHSDSNEEKALNLSSAVWFAWGVLLNSGIGEGTPRSFSARVLGMVW. The helical transmembrane segment at 652–672 threads the bilayer; it reads AGFAMIIVASYTANLAAFLVL. Residues 673–831 are Extracellular-facing; the sequence is ERPKTKLSGI…KTPNTLGLKN (159 aa). Asparagine 693 is a glycosylation site (N-linked (GlcNAc...) asparagine). The glycine site is built by serine 703 and aspartate 747. The helical transmembrane segment at 832–852 threads the bilayer; the sequence is MAGVFILVGVGIAGGVGLIII. At 853 to 997 the chain is on the cytoplasmic side; that stretch reads EVIYKKHQVK…YTSDVSHLVV (145 aa). The tract at residues 947 to 997 is disordered; the sequence is ELGKPGQSPKVMSANQPGMPMPMLGKTRPQQSVLPPRYSPGYTSDVSHLVV. Positions 987–997 are enriched in polar residues; it reads GYTSDVSHLVV.

Belongs to the glutamate-gated ion channel (TC 1.A.10.1) family. As to quaternary structure, forms a heteromeric NMDA channel with Nmdar2.

Its subcellular location is the cell membrane. It localises to the postsynaptic cell membrane. It is found in the postsynaptic density. Its function is as follows. NMDA receptor subtype of glutamate-gated ion channels with high calcium permeability and voltage-dependent sensitivity to magnesium. Mediated by glycine. This protein plays a key role in synaptic plasticity, synaptogenesis, excitotoxicity, memory acquisition and learning. It mediates neuronal functions in glutamate neurotransmission. Is involved in the cell surface targeting of NMDA receptors. Plays a role in associative learning and in long-term memory consolidation. The polypeptide is Glutamate [NMDA] receptor subunit 1 (Drosophila erecta (Fruit fly)).